Reading from the N-terminus, the 462-residue chain is Alanine racemase (462 aa).

Residue Lys-34 is the Proton acceptor; specific for D-alanine of the active site. Lys-34 bears the N6-(pyridoxal phosphate)lysine mark. Residues 73 to 132 (ASWHESVFRHCEKNYTVIRRSNPVKNSVSQNFFNYFSGLQQCFAPRNDGSSIHATTPKAL) are unknown insert. Arg-193 is a binding site for substrate. In terms of domain architecture, RPE1 insert spans 286–332 (DLSNNLSYKEEFEGDTERRTAAYINVREDSSTGSTYKLPLEGGYSRG). Catalysis depends on Tyr-357, which acts as the Proton acceptor; specific for L-alanine. Met-405 is a binding site for substrate.

The protein belongs to the alanine racemase family. The cofactor is pyridoxal 5'-phosphate.

The catalysed reaction is L-alanine = D-alanine. Its pathway is amino-acid biosynthesis; D-alanine biosynthesis; D-alanine from L-alanine: step 1/1. Functionally, catalyzes the interconversion of L-alanine and D-alanine. May also act on other amino acids. The chain is Alanine racemase (alr) from Rickettsia felis (strain ATCC VR-1525 / URRWXCal2) (Rickettsia azadi).